Here is an 860-residue protein sequence, read N- to C-terminus: Nucleolar MIF4G domain-containing protein 1 (860 aa).

Disordered stretches follow at residues 1 to 172 (MAAS…AARK), 191 to 211 (RCLGLNKRKKKDGSSSVPLSF), and 226 to 339 (GKNS…EKYI). A necessary for nucleolar localization and for targeting PPP1CA to the nucleolus region spans residues 1 to 269 (MAASRSAGEA…EEEEEGDVEK (269 aa)). A compositionally biased stretch (basic residues) spans 20–31 (VRMKRRGGRGPR). Residue S57 is modified to Phosphoserine. Residues 77 to 99 (GGRKSRKELRKEKRHLRKARRLQ) show a composition bias toward basic residues. Residues 115-131 (GAEEASGHRQDTEERAR) are compositionally biased toward basic and acidic residues. Phosphoserine is present on S139. Positions 142–151 (RKPRPSRVKA) are enriched in basic residues. Low complexity predominate over residues 152-169 (KATAATAKTRPSAAATAA). Acidic residues-rich tracts occupy residues 249 to 267 (SDLESDSQDESEEEEEGDV) and 278 to 293 (AQSEDDDEDTEEEQGE). A Required for efficient binding to PPP1CA and for targeting PPP1CA to the nucleolus motif is present at residues 307-310 (RVRF). The span at 312–325 (EDEEKSENSSEDGD) shows a compositional bias: acidic residues. A phosphoserine mark is found at S317, S320, and S321. In terms of domain architecture, MIF4G spans 362–559 (KKHVKGLLNR…ETMLALKNND (198 aa)). The region spanning 654–770 (DIRRNIFCTI…SLSILKVVEF (117 aa)) is the MI domain.

Belongs to the CWC22 family. As to quaternary structure, may interact with EIF4A1, EIF4A2 and EIF4A3. Interacts with PPP1CA and PPP1CC. In terms of tissue distribution, expressed in heart and skeletal muscle.

The protein localises to the nucleus. Its subcellular location is the nucleolus. Its function is as follows. Plays a role in targeting PPP1CA to the nucleolus. This Homo sapiens (Human) protein is Nucleolar MIF4G domain-containing protein 1 (NOM1).